A 66-amino-acid chain; its full sequence is Large ribosomal subunit protein bL31 (66 aa).

Zn(2+) contacts are provided by cysteine 16, cysteine 18, cysteine 36, and cysteine 39.

Belongs to the bacterial ribosomal protein bL31 family. Type A subfamily. In terms of assembly, part of the 50S ribosomal subunit. Zn(2+) is required as a cofactor.

In terms of biological role, binds the 23S rRNA. This is Large ribosomal subunit protein bL31 from Geobacillus thermodenitrificans (strain NG80-2).